Reading from the N-terminus, the 257-residue chain is Pimeloyl-[acyl-carrier protein] methyl ester esterase (257 aa).

In terms of domain architecture, AB hydrolase-1 spans 16 to 242 (LVLLHGWGLN…AAHAPFISHP (227 aa)). Substrate contacts are provided by residues W22, 82 to 83 (SL), and 143 to 147 (FLGLQ). S82 (nucleophile) is an active-site residue. Residues D207 and H235 contribute to the active site. A substrate-binding site is contributed by H235.

It belongs to the AB hydrolase superfamily. Carboxylesterase BioH family. In terms of assembly, monomer.

It is found in the cytoplasm. It carries out the reaction 6-carboxyhexanoyl-[ACP] methyl ester + H2O = 6-carboxyhexanoyl-[ACP] + methanol + H(+). It functions in the pathway cofactor biosynthesis; biotin biosynthesis. Functionally, the physiological role of BioH is to remove the methyl group introduced by BioC when the pimeloyl moiety is complete. It allows to synthesize pimeloyl-ACP via the fatty acid synthetic pathway through the hydrolysis of the ester bonds of pimeloyl-ACP esters. The chain is Pimeloyl-[acyl-carrier protein] methyl ester esterase from Sodalis glossinidius (strain morsitans).